Consider the following 97-residue polypeptide: Co-chaperonin GroES (97 aa).

It belongs to the GroES chaperonin family. As to quaternary structure, heptamer of 7 subunits arranged in a ring. Interacts with the chaperonin GroEL.

The protein resides in the cytoplasm. Together with the chaperonin GroEL, plays an essential role in assisting protein folding. The GroEL-GroES system forms a nano-cage that allows encapsulation of the non-native substrate proteins and provides a physical environment optimized to promote and accelerate protein folding. GroES binds to the apical surface of the GroEL ring, thereby capping the opening of the GroEL channel. This is Co-chaperonin GroES from Sodalis glossinidius (strain morsitans).